The following is a 203-amino-acid chain: Glycerol-3-phosphate acyltransferase (203 aa).

The next 6 membrane-spanning stretches (helical) occupy residues 3 to 23 (ILLA…VVVS), 51 to 71 (KAAI…VWLV), 74 to 94 (FGIG…LGHL), 116 to 136 (AVHP…AFFF), 140 to 160 (SLAA…LFGT), and 164 to 178 (PVAW…LLIW).

The protein belongs to the PlsY family. Probably interacts with PlsX.

It is found in the cell inner membrane. The enzyme catalyses an acyl phosphate + sn-glycerol 3-phosphate = a 1-acyl-sn-glycero-3-phosphate + phosphate. It functions in the pathway lipid metabolism; phospholipid metabolism. Its function is as follows. Catalyzes the transfer of an acyl group from acyl-phosphate (acyl-PO(4)) to glycerol-3-phosphate (G3P) to form lysophosphatidic acid (LPA). This enzyme utilizes acyl-phosphate as fatty acyl donor, but not acyl-CoA or acyl-ACP. The polypeptide is Glycerol-3-phosphate acyltransferase (Burkholderia pseudomallei (strain 1710b)).